The chain runs to 178 residues: Cytochrome b6-f complex iron-sulfur subunit 2 (178 aa).

The helical transmembrane segment at 17-36 threads the bilayer; that stretch reads LLNFFTGAIVATTASAAIYP. The Rieske domain occupies 61–161; that stretch reads GHPIPASQIL…VQVKDDYIWI (101 aa). Positions 107, 109, 125, and 128 each coordinate [2Fe-2S] cluster. A disulfide bridge links cysteine 112 with cysteine 127.

The protein belongs to the Rieske iron-sulfur protein family. As to quaternary structure, the 4 large subunits of the cytochrome b6-f complex are cytochrome b6, subunit IV (17 kDa polypeptide, PetD), cytochrome f and the Rieske protein, while the 4 small subunits are PetG, PetL, PetM and PetN. The complex functions as a dimer. The cofactor is [2Fe-2S] cluster.

The protein resides in the cellular thylakoid membrane. It carries out the reaction 2 oxidized [plastocyanin] + a plastoquinol + 2 H(+)(in) = 2 reduced [plastocyanin] + a plastoquinone + 4 H(+)(out). Component of the cytochrome b6-f complex, which mediates electron transfer between photosystem II (PSII) and photosystem I (PSI), cyclic electron flow around PSI, and state transitions. The protein is Cytochrome b6-f complex iron-sulfur subunit 2 of Nostoc sp. (strain PCC 7120 / SAG 25.82 / UTEX 2576).